The following is a 106-amino-acid chain: Large ribosomal subunit protein uL24 (106 aa).

It belongs to the universal ribosomal protein uL24 family. As to quaternary structure, part of the 50S ribosomal subunit.

Its function is as follows. One of two assembly initiator proteins, it binds directly to the 5'-end of the 23S rRNA, where it nucleates assembly of the 50S subunit. Functionally, one of the proteins that surrounds the polypeptide exit tunnel on the outside of the subunit. The polypeptide is Large ribosomal subunit protein uL24 (Erythrobacter litoralis (strain HTCC2594)).